A 316-amino-acid chain; its full sequence is Putative HTH-type transcriptional regulatory protein PYRAB03670 (316 aa).

Residues 131–189 form the HTH cro/C1-type domain; the sequence is LKDLREKHGYSLSELANILGVSRKSLQRYEKGDSMVTLEVALRLEEVFDEALVKPINVL. Residues 142–161 constitute a DNA-binding region (H-T-H motif); sequence LSELANILGVSRKSLQRYEK.

The polypeptide is Putative HTH-type transcriptional regulatory protein PYRAB03670 (Pyrococcus abyssi (strain GE5 / Orsay)).